Consider the following 176-residue polypeptide: ADP-ribosylation factor-like protein 11 (176 aa).

G2 carries the N-myristoyl glycine lipid modification. Residues 19 to 26 (GLDSAGKT), 63 to 67 (DIGGQ), and 122 to 125 (NKQE) contribute to the GTP site.

This sequence belongs to the small GTPase superfamily. Arf family.

Its function is as follows. May play a role in apoptosis. May act as a tumor suppressor. The sequence is that of ADP-ribosylation factor-like protein 11 (Arl11) from Mus musculus (Mouse).